The chain runs to 182 residues: Orotate phosphoribosyltransferase (182 aa).

Residues R96, K97, K100, H102, and 122–130 (EDTSTTGGS) contribute to the 5-phospho-alpha-D-ribose 1-diphosphate site. Residues T126 and R154 each contribute to the orotate site.

This sequence belongs to the purine/pyrimidine phosphoribosyltransferase family. PyrE subfamily. In terms of assembly, homodimer. Mg(2+) is required as a cofactor.

It carries out the reaction orotidine 5'-phosphate + diphosphate = orotate + 5-phospho-alpha-D-ribose 1-diphosphate. The protein operates within pyrimidine metabolism; UMP biosynthesis via de novo pathway; UMP from orotate: step 1/2. Catalyzes the transfer of a ribosyl phosphate group from 5-phosphoribose 1-diphosphate to orotate, leading to the formation of orotidine monophosphate (OMP). This Streptomyces coelicolor (strain ATCC BAA-471 / A3(2) / M145) protein is Orotate phosphoribosyltransferase.